The sequence spans 400 residues: Large envelope protein (400 aa).

Residue Met1 is modified to N-acetylmethionine. The N-myristoyl glycine; by host moiety is linked to residue Gly2. The segment at 2-119 is pre-S1; sequence GGWSSKHRKG…PPLRDTHPQA (118 aa). Positions 2–174 are pre-S; it reads GGWSSKHRKG…FTKTGDPASN (173 aa). Over 2–181 the chain is Virion surface; in external conformation; sequence GGWSSKHRKG…ASNMESTTSG (180 aa). Topologically, residues 2 to 253 are intravirion; in internal conformation; it reads GGWSSKHRKG…PGYRWMCLRR (252 aa). Trp4 is a glycosylation site (N-linked (GlcNAc...) asparagine). Positions 89–117 are disordered; sequence PAAPPPASTNRQSGRQPTPISPPLRDTHP. The span at 96–106 shows a compositional bias: polar residues; sequence STNRQSGRQPT. The interval 120–174 is pre-S2; sequence MQWNSTAFHQALQDPRVRGLYFPAGGSSSGTVNPVPNTVSHISSIFTKTGDPASN. The helical transmembrane segment at 182–202 threads the bilayer; the sequence is FLGPLLVLQAGFFLLTRILTI. Topologically, residues 203–253 are intravirion; in external conformation; sequence PQSLDSWWTSLNFLGGAPGCIGQNSQSQTSNHSPTSCPPTCPGYRWMCLRR. Residues 254–274 form a helical membrane-spanning segment; that stretch reads FIIFLFILLLCLIFLLVLLDY. Residues 275-348 are Virion surface-facing; that stretch reads QGMLPVCPLL…WASVRFSWLS (74 aa). Asn320 carries an N-linked (GlcNAc...) asparagine; by host glycan. A helical transmembrane segment spans residues 349 to 369; that stretch reads LLVPFVQWFAGLSPTVWLSVI. The Intravirion segment spans residues 370-375; the sequence is WMIWYW. Residues 376–398 traverse the membrane as a helical segment; sequence GPSLYNILSPFLPLLPIFLCLWV. At 399-400 the chain is on the virion surface side; sequence YI.

Belongs to the orthohepadnavirus major surface antigen family. In terms of assembly, in its internal form (Li-HBsAg), interacts with the capsid protein and with the isoform S. Interacts with host chaperone CANX. As to quaternary structure, associates with host chaperone CANX through its pre-S2 N glycan; this association may be essential for isoform M proper secretion. Interacts with isoform L. Interacts with the antigens of satellite virus HDV (HDVAgs); this interaction is required for encapsidation of HDV genomic RNA. Isoform M is N-terminally acetylated by host at a ratio of 90%, and N-glycosylated by host at the pre-S2 region. In terms of processing, myristoylated.

The protein resides in the virion membrane. The large envelope protein exists in two topological conformations, one which is termed 'external' or Le-HBsAg and the other 'internal' or Li-HBsAg. In its external conformation the protein attaches the virus to cell receptors and thereby initiating infection. This interaction determines the species specificity and liver tropism. This attachment induces virion internalization predominantly through caveolin-mediated endocytosis. The large envelope protein also assures fusion between virion membrane and endosomal membrane. In its internal conformation the protein plays a role in virion morphogenesis and mediates the contact with the nucleocapsid like a matrix protein. In terms of biological role, the middle envelope protein plays an important role in the budding of the virion. It is involved in the induction of budding in a nucleocapsid independent way. In this process the majority of envelope proteins bud to form subviral lipoprotein particles of 22 nm of diameter that do not contain a nucleocapsid. The sequence is that of Large envelope protein from Homo sapiens (Human).